We begin with the raw amino-acid sequence, 1244 residues long: ATP-dependent helicase/nuclease subunit A (1244 aa).

The region spanning 4–477 (TKWTEEQLSA…IQLYKNFRSR (474 aa)) is the UvrD-like helicase ATP-binding domain. 25-32 (AAAGSGKT) is an ATP binding site. Residues 517–811 (KNVDDIIGGP…RIMSIHKSKG (295 aa)) enclose the UvrD-like helicase C-terminal domain.

It belongs to the helicase family. AddA subfamily. In terms of assembly, heterodimer of AddA and AddB/RexB. It depends on Mg(2+) as a cofactor.

It carries out the reaction Couples ATP hydrolysis with the unwinding of duplex DNA by translocating in the 3'-5' direction.. It catalyses the reaction ATP + H2O = ADP + phosphate + H(+). The heterodimer acts as both an ATP-dependent DNA helicase and an ATP-dependent, dual-direction single-stranded exonuclease. Recognizes the chi site generating a DNA molecule suitable for the initiation of homologous recombination. The AddA nuclease domain is required for chi fragment generation; this subunit has the helicase and 3' -&gt; 5' nuclease activities. This is ATP-dependent helicase/nuclease subunit A from Clostridium botulinum (strain Alaska E43 / Type E3).